A 299-amino-acid chain; its full sequence is MKKLGTDLLKRGFAKMVKHGVVMDVTNVEQAQIAEDAGAAAVMALERVPADIRVQGGVARMSDPEMILEIKDAVSIPVMAKARIGHYVEAQVLESIGVDMVDESEVLTPADEVNHIDKRAFTAPFVCGARNLGEALRRIDEGAAMIRTKGEAGTGNVVEAVKHMRAVNEGIARVVGYKEMGLEAELIQMARNELKVPMELISEVAELKRLPVVNFAAGGIATPADAALMMQMGCDGVFVGSGIFKSGNPEVRAKAIVEATYNFDKADVIGEVSKNLGEAMVGINIDEIPEEKLLAKRGI.

Asp-24 is a D-ribose 5-phosphate binding site. The Schiff-base intermediate with D-ribose 5-phosphate role is filled by Lys-81. Gly-153 contributes to the D-ribose 5-phosphate binding site. A D-glyceraldehyde 3-phosphate-binding site is contributed by Arg-165. D-ribose 5-phosphate-binding positions include Gly-219 and 240–241 (GS).

Belongs to the PdxS/SNZ family. As to quaternary structure, in the presence of PdxT, forms a dodecamer of heterodimers.

The enzyme catalyses aldehydo-D-ribose 5-phosphate + D-glyceraldehyde 3-phosphate + L-glutamine = pyridoxal 5'-phosphate + L-glutamate + phosphate + 3 H2O + H(+). Its pathway is cofactor biosynthesis; pyridoxal 5'-phosphate biosynthesis. Catalyzes the formation of pyridoxal 5'-phosphate from ribose 5-phosphate (RBP), glyceraldehyde 3-phosphate (G3P) and ammonia. The ammonia is provided by the PdxT subunit. Can also use ribulose 5-phosphate and dihydroxyacetone phosphate as substrates, resulting from enzyme-catalyzed isomerization of RBP and G3P, respectively. The sequence is that of Pyridoxal 5'-phosphate synthase subunit PdxS from Methanococcus maripaludis (strain C5 / ATCC BAA-1333).